The chain runs to 296 residues: Protease HtpX homolog (296 aa).

A run of 2 helical transmembrane segments spans residues 14–34 (VVLLIVFFCLLAAIGAAVGYL) and 39–59 (YQFGLVLALIIGVIYAVSMIF). H143 provides a ligand contact to Zn(2+). E144 is an active-site residue. Zn(2+) is bound at residue H147. Helical transmembrane passes span 158-178 (IAVALASAVTLISSIGSRMLF) and 195-215 (ILVLIFSILSLILAPLAASLV). E224 contacts Zn(2+).

Belongs to the peptidase M48B family. The cofactor is Zn(2+).

It is found in the cell membrane. This chain is Protease HtpX homolog, found in Streptococcus agalactiae serotype III (strain NEM316).